Reading from the N-terminus, the 60-residue chain is Large ribosomal subunit protein bL32 (60 aa).

The tract at residues 1 to 60 (MAVQQNKKSPSKRGMHRSHDFLVNPATAIEPNTGETHLRHHISPNGFYRGRKVLKTKADE) is disordered. Residues 49-60 (RGRKVLKTKADE) are compositionally biased toward basic residues.

It belongs to the bacterial ribosomal protein bL32 family.

The chain is Large ribosomal subunit protein bL32 from Bordetella bronchiseptica (strain ATCC BAA-588 / NCTC 13252 / RB50) (Alcaligenes bronchisepticus).